We begin with the raw amino-acid sequence, 537 residues long: Small conductance calcium-activated potassium channel protein 1 (537 aa).

The segment covering 1-10 (MSSHSHNGSV) has biased composition (polar residues). A disordered region spans residues 1–90 (MSSHSHNGSV…GKPPTVSHRL (90 aa)). Residues 65-76 (QEEEEEEEEEED) are compositionally biased toward acidic residues. Residues 108–128 (LIFGMFGIVVMVTETELSWGV) traverse the membrane as a helical segment. The helical transmembrane segment at 137 to 157 (FALKCLISLSTVILLGLVILY) threads the bilayer. Residues 176–196 (IAMTWERVSLISLELVVCAIH) form a helical membrane-spanning segment. A helical membrane pass occupies residues 225 to 245 (VLLSIPMFLRLYLLARVMLLH). Residues 274-294 (LMTICPGTVLLVFSVSSWIVA) traverse the membrane as a helical segment. Positions 314–334 (FLGAMWLISITFLSIGYGDMV) form an intramembrane region, pore-forming. The interval 343 to 363 (VCLLTGIMGAGCTALVVAVVA) is segment S6. A calmodulin-binding region spans residues 381 to 460 (DTQLTKRVKN…LAELAKAQSI (80 aa)).

It belongs to the potassium channel KCNN family. KCa2.1/KCNN1 subfamily. Homodimer. Heteromultimer with KCNN2 and KCNN3. The complex is composed of 4 channel subunits each of which binds to a calmodulin subunit which regulates the channel activity through calcium-binding. Interacts with calmodulin. In terms of tissue distribution, highest expression in brain and liver with lower levels in heart, testis, kidney and colon. In colon, detected in smooth muscle cells. Expressed in atrial and ventricular myocytes with higher levels in atrial myocytes.

Its subcellular location is the membrane. It is found in the cytoplasm. The protein localises to the myofibril. The protein resides in the sarcomere. It localises to the z line. It carries out the reaction K(+)(in) = K(+)(out). With respect to regulation, inhibited by bee venom neurotoxin apamin. Inhibited by d-tubocurarine and tetraethylammonium (TEA). Small conductance calcium-activated potassium channel that mediates the voltage-independent transmembrane transfer of potassium across the cell membrane through a constitutive interaction with calmodulin which binds the intracellular calcium allowing its opening. The current is characterized by a voltage-independent activation, an intracellular calcium concentration increase-dependent activation and a single-channel conductance of about 3 picosiemens. Also presents an inwardly rectifying current, thus reducing its already small outward conductance of potassium ions, which is particularly the case when the membrane potential displays positive values, above + 20 mV. Activation is followed by membrane hyperpolarization. Thought to regulate neuronal excitability by contributing to the slow component of synaptic afterhyperpolarization. In Mus musculus (Mouse), this protein is Small conductance calcium-activated potassium channel protein 1.